The sequence spans 442 residues: Lysosomal dipeptide transporter MFSD1 (442 aa).

The short motif at 8–9 (LL) is the Dileucine internalization motif element. Transmembrane regions (helical) follow at residues 38–58 (LLVL…YDNP), 85–105 (TVIF…GALV), 107–127 (AFWL…SLAV), 187–207 (LLIG…LAYL), 238–258 (LWLI…FIGL), 276–296 (AINS…GILV), 303–323 (IIWV…LAFT), 333–353 (LLGV…AFVV), 364–384 (FMQS…GMIL), and 390–410 (LFLE…VVML).

Belongs to the major facilitator superfamily. As to quaternary structure, homodimer. Interacts with lysosomal protein GLMP (via lumenal domain); the interaction starts while both proteins are still in the endoplasmic reticulum and is required for stabilization of MFSD1 in lysosomes but has no direct effect on its targeting to lysosomes or transporter activity.

It localises to the lysosome membrane. The catalysed reaction is L-alpha-aminoacyl-L-arginine(out) = L-alpha-aminoacyl-L-arginine(in). The enzyme catalyses L-arginyl-L-alpha-amino acid(out) = L-arginyl-L-alpha-amino acid(in). It carries out the reaction L-arginyl-glycine(out) = L-arginyl-glycine(in). It catalyses the reaction L-alpha-aminoacyl-L-lysine(out) = L-alpha-aminoacyl-L-lysine(in). The catalysed reaction is L-aspartyl-L-lysine(out) = L-aspartyl-L-lysine(in). The enzyme catalyses L-alanyl-L-lysine(out) = L-alanyl-L-lysine(in). It carries out the reaction L-lysyl-L-alpha-amino acid(out) = L-lysyl-L-alpha-amino acid(in). It catalyses the reaction L-lysyl-L-alanine(out) = L-lysyl-L-alanine(in). The catalysed reaction is L-lysyl-L-lysine(out) = L-lysyl-L-lysine(in). The enzyme catalyses L-lysyl-glycine(out) = L-lysyl-glycine(in). It carries out the reaction L-alpha-aminoacyl-L-histidine(out) = L-alpha-aminoacyl-L-histidine(in). It catalyses the reaction L-histidyl-L-alpha-amino acid(out) = L-histidyl-L-alpha-amino acid(in). The catalysed reaction is L-histidyl-glycine(out) = L-histidyl-glycine(in). Its function is as follows. Lysosomal dipeptide uniporter that selectively exports lysine, arginine or histidine-containing dipeptides with a net positive charge from the lysosome lumen into the cytosol. Could play a role in a specific type of protein O-glycosylation indirectly regulating macrophages migration and tissue invasion. Also essential for liver homeostasis. This chain is Lysosomal dipeptide transporter MFSD1, found in Gallus gallus (Chicken).